The following is a 446-amino-acid chain: Na(+)-translocating NADH-quinone reductase subunit A (446 aa).

The protein belongs to the NqrA family. Composed of six subunits; NqrA, NqrB, NqrC, NqrD, NqrE and NqrF.

The enzyme catalyses a ubiquinone + n Na(+)(in) + NADH + H(+) = a ubiquinol + n Na(+)(out) + NAD(+). In terms of biological role, NQR complex catalyzes the reduction of ubiquinone-1 to ubiquinol by two successive reactions, coupled with the transport of Na(+) ions from the cytoplasm to the periplasm. NqrA to NqrE are probably involved in the second step, the conversion of ubisemiquinone to ubiquinol. In Histophilus somni (strain 2336) (Haemophilus somnus), this protein is Na(+)-translocating NADH-quinone reductase subunit A.